Consider the following 387-residue polypeptide: uncharacterized protein (387 aa).

Residues Phe-5–Thr-25 form a helical membrane-spanning segment.

This sequence belongs to the LicD transferase family.

It is found in the membrane. This is an uncharacterized protein from Caenorhabditis elegans.